A 255-amino-acid chain; its full sequence is Phosphoribosylaminoimidazole-succinocarboxamide synthase A (255 aa).

Belongs to the SAICAR synthetase family.

The enzyme catalyses 5-amino-1-(5-phospho-D-ribosyl)imidazole-4-carboxylate + L-aspartate + ATP = (2S)-2-[5-amino-1-(5-phospho-beta-D-ribosyl)imidazole-4-carboxamido]succinate + ADP + phosphate + 2 H(+). It functions in the pathway purine metabolism; IMP biosynthesis via de novo pathway; 5-amino-1-(5-phospho-D-ribosyl)imidazole-4-carboxamide from 5-amino-1-(5-phospho-D-ribosyl)imidazole-4-carboxylate: step 1/2. The polypeptide is Phosphoribosylaminoimidazole-succinocarboxamide synthase A (purC1) (Bradyrhizobium diazoefficiens (strain JCM 10833 / BCRC 13528 / IAM 13628 / NBRC 14792 / USDA 110)).